Reading from the N-terminus, the 432-residue chain is Enolase (432 aa).

Gln-167 provides a ligand contact to (2R)-2-phosphoglycerate. The Proton donor role is filled by Glu-209. Residues Asp-246, Glu-290, and Asp-317 each contribute to the Mg(2+) site. The (2R)-2-phosphoglycerate site is built by Lys-342, Arg-371, Ser-372, and Lys-393. Residue Lys-342 is the Proton acceptor of the active site.

The protein belongs to the enolase family. Component of the RNA degradosome, a multiprotein complex involved in RNA processing and mRNA degradation. Mg(2+) serves as cofactor.

It localises to the cytoplasm. The protein localises to the secreted. It is found in the cell surface. It carries out the reaction (2R)-2-phosphoglycerate = phosphoenolpyruvate + H2O. The protein operates within carbohydrate degradation; glycolysis; pyruvate from D-glyceraldehyde 3-phosphate: step 4/5. Its function is as follows. Catalyzes the reversible conversion of 2-phosphoglycerate (2-PG) into phosphoenolpyruvate (PEP). It is essential for the degradation of carbohydrates via glycolysis. The sequence is that of Enolase from Escherichia coli O139:H28 (strain E24377A / ETEC).